Reading from the N-terminus, the 96-residue chain is Translation initiation factor 1A 1 (96 aa).

Residues 8-82 form the S1-like domain; that stretch reads GSHDLRMPDD…EKGDITWRYE (75 aa).

It belongs to the eIF-1A family.

Seems to be required for maximal rate of protein biosynthesis. Enhances ribosome dissociation into subunits and stabilizes the binding of the initiator Met-tRNA(I) to 40 S ribosomal subunits. The protein is Translation initiation factor 1A 1 of Haloquadratum walsbyi (strain DSM 16790 / HBSQ001).